A 724-amino-acid polypeptide reads, in one-letter code: Ribosomal RNA large subunit methyltransferase K/L (724 aa).

Residues 42–153 form the THUMP domain; it reads DAQRLVLWSR…KGRATLSVDL (112 aa).

This sequence belongs to the methyltransferase superfamily. RlmKL family.

The protein localises to the cytoplasm. The catalysed reaction is guanosine(2445) in 23S rRNA + S-adenosyl-L-methionine = N(2)-methylguanosine(2445) in 23S rRNA + S-adenosyl-L-homocysteine + H(+). It catalyses the reaction guanosine(2069) in 23S rRNA + S-adenosyl-L-methionine = N(2)-methylguanosine(2069) in 23S rRNA + S-adenosyl-L-homocysteine + H(+). Specifically methylates the guanine in position 2445 (m2G2445) and the guanine in position 2069 (m7G2069) of 23S rRNA. The polypeptide is Ribosomal RNA large subunit methyltransferase K/L (Xylella fastidiosa (strain M12)).